A 192-amino-acid chain; its full sequence is Adenylate kinase (192 aa).

10-15 (GAGKGT) provides a ligand contact to ATP. The NMP stretch occupies residues 30–59 (STGDMLREVIRRETEIGKKAKAMINAGTLV). AMP-binding positions include T31, R36, 57–59 (TLV), 85–88 (GYPR), and Q92. The tract at residues 126 to 142 (KRVQETIIAGGQVRSDD) is LID. R127 contacts ATP. 2 residues coordinate AMP: R139 and R150. Residue I178 participates in ATP binding.

It belongs to the adenylate kinase family. As to quaternary structure, monomer.

The protein resides in the cytoplasm. The catalysed reaction is AMP + ATP = 2 ADP. Its pathway is purine metabolism; AMP biosynthesis via salvage pathway; AMP from ADP: step 1/1. Functionally, catalyzes the reversible transfer of the terminal phosphate group between ATP and AMP. Plays an important role in cellular energy homeostasis and in adenine nucleotide metabolism. This Bartonella henselae (strain ATCC 49882 / DSM 28221 / CCUG 30454 / Houston 1) (Rochalimaea henselae) protein is Adenylate kinase.